A 29-amino-acid polypeptide reads, in one-letter code: NAD(P)H-quinone oxidoreductase subunit 5, chloroplastic (29 aa).

The helical transmembrane segment at 1–15 (SGSIIHSMEANVGYS) threads the bilayer.

The protein belongs to the complex I subunit 5 family. NDH is composed of at least 16 different subunits, 5 of which are encoded in the nucleus.

It is found in the plastid. The protein resides in the chloroplast thylakoid membrane. The catalysed reaction is a plastoquinone + NADH + (n+1) H(+)(in) = a plastoquinol + NAD(+) + n H(+)(out). It carries out the reaction a plastoquinone + NADPH + (n+1) H(+)(in) = a plastoquinol + NADP(+) + n H(+)(out). NDH shuttles electrons from NAD(P)H:plastoquinone, via FMN and iron-sulfur (Fe-S) centers, to quinones in the photosynthetic chain and possibly in a chloroplast respiratory chain. The immediate electron acceptor for the enzyme in this species is believed to be plastoquinone. Couples the redox reaction to proton translocation, and thus conserves the redox energy in a proton gradient. This chain is NAD(P)H-quinone oxidoreductase subunit 5, chloroplastic, found in Pseudotsuga menziesii (Douglas-fir).